The primary structure comprises 228 residues: Rab-like protein 2B (228 aa).

GTP contacts are provided by residues 28-35 (GDSAVGKS), 76-80 (DTAGQ), and 133-136 (NKID). The interval 200-228 (LEQEEEDVPDQEQSSSIETPSEEAASPHS) is disordered.

This sequence belongs to the small GTPase superfamily. Rab family. As to quaternary structure, interacts (in its GTP-bound form) with CEP19 (via residues 121-150); this interaction is required for its localization to the mother centriole and cilium basal body. Interacts (in its GTP-bound form) with the intraflagellar transport (IFT) complex B (via the IFT74-IFT81 heterodimer). Binding to CEP19 and the IFT74-IFT81 heterodimer is mutually exclusive. In terms of tissue distribution, expressed in the testis.

It localises to the cytoplasm. Its subcellular location is the cytoskeleton. The protein resides in the microtubule organizing center. It is found in the centrosome. The protein localises to the centriole. It localises to the cilium basal body. In terms of biological role, small GTPase required for ciliation. Activated in a guanine nucleotide exchange factor (GEF)-independent manner via its intrinsic GDP for GTP nucleotide exchange ability. Involved in ciliary assembly by binding the intraflagellar transport (IFT) complex B from the large pool pre-docked at the base of the cilium and thus triggers its entry into the cilia. The polypeptide is Rab-like protein 2B (RABL2B) (Homo sapiens (Human)).